We begin with the raw amino-acid sequence, 337 residues long: Glyceraldehyde-3-phosphate dehydrogenase (337 aa).

Residues 12-13 (RI), Asp-34, and Arg-79 each bind NAD(+). Residues 150–152 (SCT), Thr-181, 210–211 (TG), and Arg-233 each bind D-glyceraldehyde 3-phosphate. Residue Cys-151 is the Nucleophile of the active site. Asn-315 is an NAD(+) binding site.

This sequence belongs to the glyceraldehyde-3-phosphate dehydrogenase family. In terms of assembly, homotetramer.

The protein resides in the cytoplasm. It carries out the reaction D-glyceraldehyde 3-phosphate + phosphate + NAD(+) = (2R)-3-phospho-glyceroyl phosphate + NADH + H(+). It participates in carbohydrate degradation; glycolysis; pyruvate from D-glyceraldehyde 3-phosphate: step 1/5. The sequence is that of Glyceraldehyde-3-phosphate dehydrogenase (GPD) from Ajellomyces capsulatus (Darling's disease fungus).